Reading from the N-terminus, the 642-residue chain is MSLWLFFVQTVLLIQCALGGLPNAKDYLVAPDLLPGLNDVKDKELIPEMHAGHIPLDDGDDDDDDDEKNYFFWKFHDLANQTSVVASKTLIIWLNGGPGCSSLDGALMESGALRIDDDGEAYLNPGSWHTRGDIVFVDQPAGTGFSTVGDSKYDKDLNQVSKHFMKFLKNYFKIFPDDLDKDLVLAGESYAGQYIPFFANEILKFNSKLDKDDNEEESRSGKKYNLKSLLIGNGWIDPDQQSLSYIPFALENNLISTKADYFPDLLNMHSRCQNLVNNNGGKKFSFDECEDILTKILYYTRRKTDENGNKVPSNQECTNIYDFRLFDSYPACGSNWPDDLPSVSKFLGKPGVMDSLHLDVDKVPHWRECDSKVSSHLKNKNTQPSIHLLPNLLKHMQIFLFNGDKDIICNSRGVQDLIKNMKWNNHTGFTNDAEYYDWQYYDQFTDDTISAGFVKHESNLTYVSVYNASHMVPYDNALISRGIMDIYLKDVELVVGKDNQDDVIISKDFVVHSDHSTGEEELSADQKQDEDENSHKDRHRNSDKFEIAVILLVVFSITGTIAYYFLRERFRKQIHAILIDPENRPPSSNKSVAWADDIENQGDDFKLSIDEAPSTADKPAKNKSGYTKVPNTDDDSFELDNL.

Positions 1–19 (MSLWLFFVQTVLLIQCALG) are cleaved as a signal peptide. At 20 to 544 (GLPNAKDYLV…HKDRHRNSDK (525 aa)) the chain is on the lumenal side. Residue asparagine 80 is glycosylated (N-linked (GlcNAc...) asparagine). Residues serine 189 and aspartate 406 contribute to the active site. Asparagine 425, asparagine 459, and asparagine 467 each carry an N-linked (GlcNAc...) asparagine glycan. Residue histidine 470 is part of the active site. Residues 515–539 (HSTGEEELSADQKQDEDENSHKDRH) form a disordered region. A compositionally biased stretch (acidic residues) spans 519–532 (EEELSADQKQDEDE). A helical membrane pass occupies residues 545–565 (FEIAVILLVVFSITGTIAYYF). Residues 566-642 (LRERFRKQIH…DDDSFELDNL (77 aa)) lie on the Cytoplasmic side of the membrane. The segment at 609–642 (IDEAPSTADKPAKNKSGYTKVPNTDDDSFELDNL) is disordered. Residues 632–642 (TDDDSFELDNL) are compositionally biased toward acidic residues.

The protein belongs to the peptidase S10 family.

It is found in the golgi apparatus. The protein localises to the trans-Golgi network membrane. The catalysed reaction is Preferential release of a C-terminal arginine or lysine residue.. Protease with a carboxypeptidase B-like function involved in the C-terminal processing of the lysine and arginine residues from protein precursors. Promotes cell fusion and is involved in the programmed cell death. The sequence is that of Pheromone-processing carboxypeptidase KEX1 (KEX1) from Kluyveromyces lactis (strain ATCC 8585 / CBS 2359 / DSM 70799 / NBRC 1267 / NRRL Y-1140 / WM37) (Yeast).